The chain runs to 556 residues: Formate--tetrahydrofolate ligase 1 (556 aa).

ATP is bound at residue 65 to 72 (TPAGEGKT).

Belongs to the formate--tetrahydrofolate ligase family.

It carries out the reaction (6S)-5,6,7,8-tetrahydrofolate + formate + ATP = (6R)-10-formyltetrahydrofolate + ADP + phosphate. It participates in one-carbon metabolism; tetrahydrofolate interconversion. The polypeptide is Formate--tetrahydrofolate ligase 1 (Desulfitobacterium hafniense (strain Y51)).